We begin with the raw amino-acid sequence, 880 residues long: Alanine--tRNA ligase (880 aa).

Residues H548, H552, C651, and H655 each contribute to the Zn(2+) site.

This sequence belongs to the class-II aminoacyl-tRNA synthetase family. Zn(2+) is required as a cofactor.

The protein localises to the cytoplasm. The catalysed reaction is tRNA(Ala) + L-alanine + ATP = L-alanyl-tRNA(Ala) + AMP + diphosphate. Functionally, catalyzes the attachment of alanine to tRNA(Ala) in a two-step reaction: alanine is first activated by ATP to form Ala-AMP and then transferred to the acceptor end of tRNA(Ala). Also edits incorrectly charged Ser-tRNA(Ala) and Gly-tRNA(Ala) via its editing domain. This is Alanine--tRNA ligase from Tropheryma whipplei (strain TW08/27) (Whipple's bacillus).